Reading from the N-terminus, the 36-residue chain is Photosystem I reaction center subunit VIII (36 aa).

Residues 8–28 form a helical membrane-spanning segment; sequence AILVPIVGLVFPALSMALFFI.

It belongs to the PsaI family.

The protein resides in the plastid. The protein localises to the chloroplast thylakoid membrane. May help in the organization of the PsaL subunit. The protein is Photosystem I reaction center subunit VIII of Phaeodactylum tricornutum (strain CCAP 1055/1).